The following is a 93-amino-acid chain: Small ribosomal subunit protein uS19 (93 aa).

The protein belongs to the universal ribosomal protein uS19 family.

Functionally, protein S19 forms a complex with S13 that binds strongly to the 16S ribosomal RNA. The protein is Small ribosomal subunit protein uS19 of Mycobacteroides abscessus (strain ATCC 19977 / DSM 44196 / CCUG 20993 / CIP 104536 / JCM 13569 / NCTC 13031 / TMC 1543 / L948) (Mycobacterium abscessus).